The chain runs to 659 residues: Protein FAM161A (659 aa).

Residues 34–59 (LGERQQQRTASVSPQRLPRTSMGTPA) are disordered. Residues 96 to 120 (YVQVEKLKKAHLQNMEQLEKMYDKK) adopt a coiled-coil conformation. Disordered stretches follow at residues 165–190 (GSVS…EHSV) and 401–428 (LAPG…PKIS). Residues 408–426 (GTKKGKCYKPKEKQKHKPK) show a composition bias toward basic residues. The stretch at 531 to 557 (AIRKREKQRTKDYMKELEAMEQRVLNK) forms a coiled coil. The tract at residues 594 to 659 (NGQSASVDEH…TDEDHSMEEI (66 aa)) is disordered. The segment covering 600-616 (VDEHVSVREENNPRAES) has biased composition (basic and acidic residues). Residues 637 to 650 (PESEEAQEEDAYST) are compositionally biased toward acidic residues.

The protein belongs to the FAM161 family.

It localises to the cytoplasm. It is found in the cytoskeleton. The protein resides in the cilium basal body. The protein localises to the cell projection. Its subcellular location is the cilium. It localises to the microtubule organizing center. It is found in the centrosome. The protein resides in the centriole. Its function is as follows. Involved in ciliogenesis. In Xenopus tropicalis (Western clawed frog), this protein is Protein FAM161A (fam161a).